The following is a 601-amino-acid chain: Translation initiation factor IF-2 (601 aa).

A disordered region spans residues 54–101 (GHTASAEPAPAQASGSPASPAQTEAQEAPQPTATATAEREPAAPPARE). Positions 57–89 (ASAEPAPAQASGSPASPAQTEAQEAPQPTATAT) are enriched in low complexity. The region spanning 104-273 (HRAPVVTIMG…SLTAELEDLR (170 aa)) is the tr-type G domain. The tract at residues 113 to 120 (GHVDHGKT) is G1. 113 to 120 (GHVDHGKT) serves as a coordination point for GTP. The G2 stretch occupies residues 138 to 142 (GITQH). Residues 159–162 (DTPG) form a G3 region. Residues 159–163 (DTPGH) and 213–216 (NKVD) contribute to the GTP site. The tract at residues 213-216 (NKVD) is G4. Positions 249-251 (SAK) are G5.

Belongs to the TRAFAC class translation factor GTPase superfamily. Classic translation factor GTPase family. IF-2 subfamily.

It localises to the cytoplasm. Functionally, one of the essential components for the initiation of protein synthesis. Protects formylmethionyl-tRNA from spontaneous hydrolysis and promotes its binding to the 30S ribosomal subunits. Also involved in the hydrolysis of GTP during the formation of the 70S ribosomal complex. This chain is Translation initiation factor IF-2, found in Deinococcus geothermalis (strain DSM 11300 / CIP 105573 / AG-3a).